Consider the following 525-residue polypeptide: MAGLWLGLVWQKLLLWGAASAVSLAGASLVLSLLQRVASYARKWQQMRPIPTVARAYPLVGHALLMKRDGREFFQQIIEYTEEYRHMPLLKLWVGPVPMVALYNAENVEVILTSSRQIDKSSMYKFLEPWLGLGLLTSTGNKWRSRRKMLTPTFHFTILEDFLDIMNEQANILVKKLEKHVNQEAFNCFFYITLCALDIICETAMGKNIGAQSNDDSEYVRAVYRMSQMIFQRIKMPWLWLDLWYLMFKEGWEHEKGLKILHTFTNNVIAERANEMNADEDCRGVGRGSAPSKNKRRAFLDLLLSVTDDEGNRLSHEDIREEVDTFMFEGHDTTAAAINWSLYLLGCNPEVQQKVDHELDDVFGKSDRPATVEDLKKLRYLECVIKETLRLFPSVPLFARSVSEDCEVAGYRVLKGTEAVIIPYALHRDPRYFPNPEEFQPERFFPENAQGRHPYAYVPFSAGPRNCIGQKFAVMEEKTILSCILRHFWIESNQKREELGLEGQLILRPSNGIWIKLKRRDADEP.

The chain crosses the membrane as a helical span at residues 13 to 33; the sequence is LLLWGAASAVSLAGASLVLSL. The heme site is built by Glu-329 and Cys-467.

It belongs to the cytochrome P450 family. The cofactor is heme.

Its subcellular location is the endoplasmic reticulum membrane. It catalyses the reaction dodecanoate + reduced [NADPH--hemoprotein reductase] + O2 = 12-hydroxydodecanoate + oxidized [NADPH--hemoprotein reductase] + H2O + H(+). The catalysed reaction is tetradecanoate + reduced [NADPH--hemoprotein reductase] + O2 = 14-hydroxytetradecanoate + oxidized [NADPH--hemoprotein reductase] + H2O + H(+). The enzyme catalyses hexadecanoate + reduced [NADPH--hemoprotein reductase] + O2 = 16-hydroxyhexadecanoate + oxidized [NADPH--hemoprotein reductase] + H2O + H(+). It carries out the reaction (5Z,8Z,11Z,14Z,17Z)-eicosapentaenoate + reduced [NADPH--hemoprotein reductase] + O2 = 20-hydroxy-(5Z,8Z,11Z,14Z,17Z)-eicosapentaenoate + oxidized [NADPH--hemoprotein reductase] + H2O + H(+). It catalyses the reaction (4Z,7Z,10Z,13Z,16Z,19Z)-docosahexaenoate + reduced [NADPH--hemoprotein reductase] + O2 = 22-hydroxy-(4Z,7Z,10Z,13Z,16Z,19Z)-docosahexaenoate + oxidized [NADPH--hemoprotein reductase] + H2O + H(+). Its pathway is lipid metabolism; fatty acid metabolism. With respect to regulation, inhibited by N-hydroxy-N'-(4-n-butyl-2-methylphenyl formamidine)(HET0016) with an IC(50) of 38 nM. Functionally, a cytochrome P450 monooxygenase involved in fatty acid metabolism in the eye. Catalyzes the omega-hydroxylation of polyunsaturated fatty acids (PUFAs) docosahexaenoate (DHA) and its precursor eicosapentaenoate (EPA), and may contribute to the homeostasis of these retinal PUFAs. Omega hydroxylates saturated fatty acids such as laurate, myristate and palmitate, the catalytic efficiency decreasing in the following order: myristate &gt; laurate &gt; palmitate (C14&gt;C12&gt;C16). Mechanistically, uses molecular oxygen inserting one oxygen atom into a substrate, and reducing the second into a water molecule, with two electrons provided by NADPH via cytochrome P450 reductase (CPR; NADPH-ferrihemoprotein reductase). In Pongo abelii (Sumatran orangutan), this protein is Cytochrome P450 4V2 (CYP4V2).